The primary structure comprises 753 residues: 5-methyltetrahydropteroyltriglutamate--homocysteine methyltransferase (753 aa).

5-methyltetrahydropteroyltri-L-glutamate is bound by residues 17-20 and Lys-117; that span reads RELK. L-homocysteine contacts are provided by residues 431–433 and Glu-484; that span reads IGS. L-methionine contacts are provided by residues 431–433 and Glu-484; that span reads IGS. 5-methyltetrahydropteroyltri-L-glutamate-binding positions include 515–516 and Trp-561; that span reads RC. Asp-599 contributes to the L-homocysteine binding site. Residue Asp-599 coordinates L-methionine. Glu-605 provides a ligand contact to 5-methyltetrahydropteroyltri-L-glutamate. Residues His-641, Cys-643, and Glu-665 each contribute to the Zn(2+) site. His-694 acts as the Proton donor in catalysis. Cys-726 contributes to the Zn(2+) binding site.

The protein belongs to the vitamin-B12 independent methionine synthase family. Zn(2+) serves as cofactor.

The enzyme catalyses 5-methyltetrahydropteroyltri-L-glutamate + L-homocysteine = tetrahydropteroyltri-L-glutamate + L-methionine. Its pathway is amino-acid biosynthesis; L-methionine biosynthesis via de novo pathway; L-methionine from L-homocysteine (MetE route): step 1/1. In terms of biological role, catalyzes the transfer of a methyl group from 5-methyltetrahydrofolate to homocysteine resulting in methionine formation. The sequence is that of 5-methyltetrahydropteroyltriglutamate--homocysteine methyltransferase from Shigella dysenteriae serotype 1 (strain Sd197).